The sequence spans 95 residues: Mitochondrial import inner membrane translocase subunit Tim13 (95 aa).

The residue at position 1 (M1) is an N-acetylmethionine. S7 is modified (phosphoserine). The Twin CX3C motif motif lies at 46–69 (CFRKCIGKPGGSLDNSEQKCIAMC). Disulfide bonds link C46-C69 and C50-C65. K53 is subject to N6-succinyllysine.

This sequence belongs to the small Tim family. Heterohexamer; composed of 3 copies of TIMM8 (TIMM8A or TIMM8B) and 3 copies of TIMM13, named soluble 70 kDa complex. Associates with the TIM22 complex, whose core is composed of TIMM22. As to expression, ubiquitous, with highest expression in heart, kidney, liver and skeletal muscle.

The protein localises to the mitochondrion inner membrane. Mitochondrial intermembrane chaperone that participates in the import and insertion of some multi-pass transmembrane proteins into the mitochondrial inner membrane. Also required for the transfer of beta-barrel precursors from the TOM complex to the sorting and assembly machinery (SAM complex) of the outer membrane. Acts as a chaperone-like protein that protects the hydrophobic precursors from aggregation and guide them through the mitochondrial intermembrane space. The TIMM8-TIMM13 complex mediates the import of proteins such as TIMM23, SLC25A12/ARALAR1 and SLC25A13/ARALAR2, while the predominant TIMM9-TIMM10 70 kDa complex mediates the import of much more proteins. The chain is Mitochondrial import inner membrane translocase subunit Tim13 (TIMM13) from Homo sapiens (Human).